The following is a 172-amino-acid chain: Macro domain-containing protein CT2219 (172 aa).

Residues 1 to 172 (MPDNVLIHAI…DVYQKALAAG (172 aa)) enclose the Macro domain.

This sequence belongs to the MacroD-type family.

The chain is Macro domain-containing protein CT2219 from Chlorobaculum tepidum (strain ATCC 49652 / DSM 12025 / NBRC 103806 / TLS) (Chlorobium tepidum).